A 290-amino-acid polypeptide reads, in one-letter code: Arylamine N-acetyltransferase 1 (290 aa).

An N-acetylmethionine modification is found at methionine 1. Cysteine 68 (acyl-thioester intermediate) is an active-site residue. Serine 103 contributes to the CoA binding site. Residue 106 to 107 (IH) coordinates substrate. Active-site residues include histidine 107 and aspartate 122. Residues tyrosine 208 and serine 287 each contribute to the CoA site.

Belongs to the arylamine N-acetyltransferase family.

It is found in the cytoplasm. The catalysed reaction is an arylamine + acetyl-CoA = an N-acetylarylamine + CoA. In terms of biological role, participates in the detoxification of a plethora of hydrazine and arylamine drugs. This is Arylamine N-acetyltransferase 1 (NAT1) from Mesocricetus auratus (Golden hamster).